A 521-amino-acid polypeptide reads, in one-letter code: Pentatricopeptide repeat-containing protein At4g26680, mitochondrial (521 aa).

The transit peptide at 1 to 38 directs the protein to the mitochondrion; it reads MIRISIGVNRRLRYQFSSFAGYSGSENPRLFKTLGAAN. 10 PPR repeats span residues 167 to 201, 202 to 236, 237 to 271, 272 to 306, 307 to 341, 342 to 376, 377 to 411, 412 to 446, 447 to 481, and 482 to 516; these read TPRV…GFLP, TVES…KISP, NPYT…GFRA, TDVS…GLQP, NVVT…NVAP, NTVT…GIQR, DILT…NLVP, NSST…GCHP, NEQT…SIPL, and DSRT…KFLQ.

The protein belongs to the PPR family. P subfamily.

It is found in the mitochondrion. This is Pentatricopeptide repeat-containing protein At4g26680, mitochondrial from Arabidopsis thaliana (Mouse-ear cress).